A 458-amino-acid chain; its full sequence is tRNA modification GTPase MnmE (458 aa).

Residues Arg-22, Glu-85, and Arg-124 each contribute to the (6S)-5-formyl-5,6,7,8-tetrahydrofolate site. Positions Gly-220 to Phe-379 constitute a TrmE-type G domain. Asn-230 is a binding site for K(+). GTP is bound by residues Asn-230–Ser-235, Thr-249–Thr-255, and Asp-274–Gly-277. Ser-234 serves as a coordination point for Mg(2+). The K(+) site is built by Thr-249, Ile-251, and Thr-254. Thr-255 contributes to the Mg(2+) binding site. Residue Lys-458 participates in (6S)-5-formyl-5,6,7,8-tetrahydrofolate binding.

Belongs to the TRAFAC class TrmE-Era-EngA-EngB-Septin-like GTPase superfamily. TrmE GTPase family. Homodimer. Heterotetramer of two MnmE and two MnmG subunits. Requires K(+) as cofactor.

The protein resides in the cytoplasm. Its function is as follows. Exhibits a very high intrinsic GTPase hydrolysis rate. Involved in the addition of a carboxymethylaminomethyl (cmnm) group at the wobble position (U34) of certain tRNAs, forming tRNA-cmnm(5)s(2)U34. This Shouchella clausii (strain KSM-K16) (Alkalihalobacillus clausii) protein is tRNA modification GTPase MnmE.